The following is a 623-amino-acid chain: Chaperone protein DnaK (623 aa).

Thr-174 carries the phosphothreonine; by autocatalysis modification. Disordered regions lie at residues 470–504 and 578–623; these read ITIKSSSGLSDEEIKKMQKDAEEHAEEDKKRKEEV and GGAQ…DPDK. Over residues 481–504 the composition is skewed to basic and acidic residues; it reads EEIKKMQKDAEEHAEEDKKRKEEV. Residues 578 to 604 show a composition bias toward low complexity; sequence GGAQGAAGQAGPQGAQGGQPNNDNGSS. A compositionally biased stretch (basic and acidic residues) spans 614-623; it reads GDFHKVDPDK.

The protein belongs to the heat shock protein 70 family.

Functionally, acts as a chaperone. This chain is Chaperone protein DnaK, found in Lactobacillus gasseri (strain ATCC 33323 / DSM 20243 / BCRC 14619 / CIP 102991 / JCM 1131 / KCTC 3163 / NCIMB 11718 / NCTC 13722 / AM63).